The primary structure comprises 469 residues: Tetratricopeptide repeat protein 38 (469 aa).

TPR repeat units lie at residues 107–140, 179–212, and 251–284; these read REKL…HPTD, SYVK…ERTD, and CHVY…QCFA.

The protein belongs to the TTC38 family.

The chain is Tetratricopeptide repeat protein 38 (ttc38) from Xenopus laevis (African clawed frog).